The chain runs to 495 residues: MGTEAEPPSPPSPPAQQQEQANPPVWNAQNQKPARLYRLVLFFIAGSLTAWMFHAFSSSNLAWKLRQLHHLPTAHYLQTRDEFALYSVEELNAFKEFYDKSVSDSVGASFTEAEQTSINEALVSLRMAQDMYLTGKDDKAARLFEHALALAPRHPEVLLRYGEFLEHNQRNIVLADQYYFQALTISPSNSEALANRQRTADVVQNLDQRRLESLDSKRDALSAIHESNAALRRAKKEAYFQHIYHSVGIEGNTMTLAQTRSILETRMAVDGKSIDEHNEILGMDLAMKYINASLVQKIEITIKDILELHRRVMGHVDPIEGGEFRRNQVYVGGHIPPGPGDLALLMQRFERWLNSEHISTLHPVNYAALAHYKLVHIHPFIDGNGRTSRLLMNTLLMRAGYPPVIIPKQQRSKYYHFLKLANEGDIRPFVRFIADCTEKTLDLYLWATSDLPQQIPMLIQTESEAGERLAQMQSPNVAQRSSILEFYESGSGALP.

Residues 1 to 23 are disordered; sequence MGTEAEPPSPPSPPAQQQEQANP. A helical membrane pass occupies residues 36-58; it reads LYRLVLFFIAGSLTAWMFHAFSS. TPR repeat units follow at residues 121 to 154 and 155 to 189; these read ALVSLRMAQDMYLTGKDDKAARLFEHALALAPRH and PEVLLRYGEFLEHNQRNIVLADQYYFQALTISPSN. Residues 246-251 carry the Inhibitory (S/T)XXXE(G/N) motif motif; the sequence is SVGIEG. Residues Glu250 and 331–334 contribute to the ATP site; that span reads VGGH. The region spanning 300 to 435 is the Fido domain; sequence ITIKDILELH…IRPFVRFIAD (136 aa). His378 is an active-site residue. ATP is bound by residues 382 to 389, 414 to 415, and Asn422; these read DGNGRTSR and YY.

It belongs to the fic family. Homodimer.

The protein localises to the membrane. The catalysed reaction is L-tyrosyl-[protein] + ATP = O-(5'-adenylyl)-L-tyrosyl-[protein] + diphosphate. It catalyses the reaction L-threonyl-[protein] + ATP = 3-O-(5'-adenylyl)-L-threonyl-[protein] + diphosphate. It carries out the reaction 3-O-(5'-adenylyl)-L-threonyl-[protein] + H2O = L-threonyl-[protein] + AMP + H(+). With respect to regulation, the side chain of Glu-250 determines which of the two opposing activities (AMPylase or de-AMPylase) will take place. In response to endoplasmic reticulum stress, mediates de-AMPylase activity. Adenylyltransferase activity is inhibited by the inhibitory helix present at the N-terminus: Glu-250 binds ATP and competes with ATP-binding at Arg-389, thereby preventing adenylyltransferase activity. In unstressed cells, disengagement of Glu-250 promotes adenylyltransferase activity. Activation dissociates ATP-binding from Glu-250, allowing ordered binding of the entire ATP moiety with the alpha-phosphate in an orientation that is productive for accepting an incoming target hydroxyl side chain. In terms of biological role, protein that can both mediate the addition of adenosine 5'-monophosphate (AMP) to specific residues of target proteins (AMPylation), and the removal of the same modification from target proteins (de-AMPylation), depending on the context. The side chain of Glu-250 determines which of the two opposing activities (AMPylase or de-AMPylase) will take place. Acts as a key regulator of the unfolded protein response (UPR) by mediating AMPylation or de-AMPylation of Hsc70-3/BiP. In unstressed cells, acts as an adenylyltransferase by mediating AMPylation of Hsc70-3/BiP at 'Thr-518', thereby inactivating it. In response to endoplasmic reticulum stress, acts as a phosphodiesterase by mediating removal of ATP (de-AMPylation) from Hsc70-3/BiP at 'Thr-518', leading to restore HSPA5/BiP activity. The chain is Protein adenylyltransferase Fic from Drosophila erecta (Fruit fly).